The primary structure comprises 903 residues: Translation initiation factor IF-2 (903 aa).

Residues 66–296 are disordered; the sequence is QATLKGEGPV…GRSRKREMEN (231 aa). The segment covering 121-132 has biased composition (basic and acidic residues); the sequence is NTDETRVQEHKP. Composition is skewed to low complexity over residues 139 to 152 and 178 to 195; these read AGDA…AAAG and AATG…GQQS. The segment covering 204-231 has biased composition (basic and acidic residues); the sequence is EGRSRQDENKGSAREDQANRFATRDKEA. Residues 246-255 are compositionally biased toward basic residues; that stretch reads RRPAHSKPLR. Basic and acidic residues-rich tracts occupy residues 263-276 and 285-296; these read VTKD…DRSN and ESGRSRKREMEN. One can recognise a tr-type G domain in the interval 403–572; it reads ERPPVVTVMG…LLTADVAELK (170 aa). A G1 region spans residues 412–419; the sequence is GHVDHGKT. 412–419 is a binding site for GTP; that stretch reads GHVDHGKT. Residues 437 to 441 form a G2 region; sequence GITQH. The segment at 458–461 is G3; sequence DTPG. GTP contacts are provided by residues 458-462 and 512-515; these read DTPGH and NKID. Positions 512-515 are G4; sequence NKID. The G5 stretch occupies residues 548–550; sequence SAV.

It belongs to the TRAFAC class translation factor GTPase superfamily. Classic translation factor GTPase family. IF-2 subfamily.

The protein localises to the cytoplasm. In terms of biological role, one of the essential components for the initiation of protein synthesis. Protects formylmethionyl-tRNA from spontaneous hydrolysis and promotes its binding to the 30S ribosomal subunits. Also involved in the hydrolysis of GTP during the formation of the 70S ribosomal complex. The sequence is that of Translation initiation factor IF-2 from Moorella thermoacetica (strain ATCC 39073 / JCM 9320).